Here is a 179-residue protein sequence, read N- to C-terminus: Translation initiation factor IF-3 (179 aa).

Belongs to the IF-3 family. As to quaternary structure, monomer.

It is found in the cytoplasm. In terms of biological role, IF-3 binds to the 30S ribosomal subunit and shifts the equilibrium between 70S ribosomes and their 50S and 30S subunits in favor of the free subunits, thus enhancing the availability of 30S subunits on which protein synthesis initiation begins. The sequence is that of Translation initiation factor IF-3 from Buchnera aphidicola subsp. Schizaphis graminum (strain Sg).